Consider the following 171-residue polypeptide: MNHFELFGLPSQFQLDGSLLSSQFRELQKRFHPDNFATASERDRLMAVQKAAQINDAYQVLKHPISRAEYILAENGTEIRGEQQTMQDPMFLMEQMELREELEDIADSSDPESALFDFDSKVSKMYKQHLASVEQELDQGLWAEAADRVRKLKFIAKLKNEIELVEDKLLG.

A J domain is found at 2–74; sequence NHFELFGLPS…ISRAEYILAE (73 aa).

Belongs to the HscB family. In terms of assembly, interacts with HscA and stimulates its ATPase activity.

In terms of biological role, co-chaperone involved in the maturation of iron-sulfur cluster-containing proteins. Seems to help targeting proteins to be folded toward HscA. The chain is Co-chaperone protein HscB homolog from Vibrio campbellii (strain ATCC BAA-1116).